The primary structure comprises 299 residues: uncharacterized protein (299 aa).

An HTH lysR-type domain is found at 1-59; it reads MDKIHAMQLFIKVAELESFSRAADFFALPKGSVSRQIQALEHQLGTQLLQRTTRRVKLT. The H-T-H motif DNA-binding region spans 19–38; it reads FSRAADFFALPKGSVSRQIQ.

This sequence belongs to the LysR transcriptional regulatory family.

This is an uncharacterized protein from Escherichia coli (strain K12).